Consider the following 357-residue polypeptide: tRNA N6-adenosine threonylcarbamoyltransferase (357 aa).

His120 and His124 together coordinate Fe cation. Substrate contacts are provided by residues Leu143 to Gly147, Asp176, Gly189, and Asn289. Asp317 serves as a coordination point for Fe cation.

Belongs to the KAE1 / TsaD family. Fe(2+) is required as a cofactor.

Its subcellular location is the cytoplasm. The enzyme catalyses L-threonylcarbamoyladenylate + adenosine(37) in tRNA = N(6)-L-threonylcarbamoyladenosine(37) in tRNA + AMP + H(+). Its function is as follows. Required for the formation of a threonylcarbamoyl group on adenosine at position 37 (t(6)A37) in tRNAs that read codons beginning with adenine. Is involved in the transfer of the threonylcarbamoyl moiety of threonylcarbamoyl-AMP (TC-AMP) to the N6 group of A37, together with TsaE and TsaB. TsaD likely plays a direct catalytic role in this reaction. This chain is tRNA N6-adenosine threonylcarbamoyltransferase, found in Polynucleobacter necessarius subsp. necessarius (strain STIR1).